Reading from the N-terminus, the 217-residue chain is Flagellin B2 (217 aa).

A propeptide spanning residues 1-12 (MKVFEFLKGKRG) is cleaved from the precursor.

It belongs to the archaeal flagellin family.

Its subcellular location is the archaeal flagellum. In terms of biological role, flagellin is the subunit protein which polymerizes to form the filaments of archaeal flagella. The chain is Flagellin B2 (flaB2) from Methanocaldococcus jannaschii (strain ATCC 43067 / DSM 2661 / JAL-1 / JCM 10045 / NBRC 100440) (Methanococcus jannaschii).